The primary structure comprises 413 residues: MRVLIRPNFLSNLIRYCSRGTHSHDRSLRSVLSSNMIRLYTTGMEPQLSPDLIKIMDQRLSAIEHRNAVLQKLINQPEYSPEEFSRANKELRKLRDSMLLINDLRAKQKEIDGLKSLVSESSDDKDMLDLAVGELDEAVEEEKRLQTLLLKSLLPKDEADERDCILEVRAGTGGEEASLFAMDIFRMYERYSQKKGWKFDIVDITESDMKGYKEASAAICGASVYGKLKFESGIHRVQRIPITEKSGRIHTSAISVAILPQADEVDVQLRNEDLRIDTYRSGGSGGQHANTTNSAVRIIHLPTGMMVSIQDERSQHMNRAKALKVLCARLYEIERLRIQSSRSKLRSDQIGSGDRSGRIRTYNFPQGRVTDHRVGITHHAIEDMMQGENLDMFIDALLLRQEMDAIASFSSTS.

The transit peptide at 1–40 directs the protein to the mitochondrion; it reads MRVLIRPNFLSNLIRYCSRGTHSHDRSLRSVLSSNMIRLY. Residue glutamine 287 is modified to N5-methylglutamine.

This sequence belongs to the prokaryotic/mitochondrial release factor family. In terms of processing, methylation increases the termination efficiency of RF1. In terms of tissue distribution, mostly expressed in seedlings, stems and adult plants, and, to a lower extent, in siliques. Barely detected in etiolated seedlings and roots.

The protein resides in the mitochondrion. Functionally, peptide chain release factor 1 directs the termination of translation in response to the peptide chain termination codons UAG and UAA in mitochondria. The chain is Peptide chain release factor 1, mitochondrial from Arabidopsis thaliana (Mouse-ear cress).